The sequence spans 736 residues: Prospero homeobox protein 1 (736 aa).

Positions 103 to 135 (KNGGTEPSFQASGLSSTGSEVHQEDVCSNSSRD) are enriched in polar residues. The tract at residues 103-146 (KNGGTEPSFQASGLSSTGSEVHQEDVCSNSSRDSPQECLSPFGR) is disordered. The short motif at 163 to 168 (RAKRAR) is the Nuclear localization signal element. Disordered regions lie at residues 180-220 (PRVA…QQQS), 261-301 (YDST…EMCE), 319-344 (EIGENKPKREGPKEKDQGPNSFHPEG), 445-465 (NSSDQPASAPPAGGHHASLHQ), and 499-518 (PSASFPGKERASPESLDLTR). Over residues 264–274 (TDSENDEDGNL) the composition is skewed to acidic residues. Residues 319–335 (EIGENKPKREGPKEKDQ) show a composition bias toward basic and acidic residues. Over residues 450 to 460 (PASAPPAGGHH) the composition is skewed to low complexity. Positions 505-518 (GKERASPESLDLTR) are enriched in basic and acidic residues. The 59-residue stretch at 576–634 (QEGLSPNHLKKAKLMFFYTRYPSSNMLKTYFSDVKFNRCITSQLIKWFSNFREFYYIQM) folds into the Prospero-type homeo domain. Residues 576–734 (QEGLSPNHLK…KSPNCLQELL (159 aa)) form a homeo-Prospero region. Residues 635–734 (EKYARQAIND…KSPNCLQELL (100 aa)) form the Prospero domain.

The protein belongs to the Prospero homeodomain family. In terms of tissue distribution, expressed most actively in the developing lens and midgut and at lower levels in the developing brain, heart, muscle and retina.

It localises to the nucleus. In terms of biological role, transcription factor which may be involved in developmental processes such as cell fate determination, gene transcriptional regulation and progenitor cell regulation in a number of organs. May be essential in the development and function of the eye. May play a role in the regulation of the circadian rhythm by repressing the expression of clock genes. This chain is Prospero homeobox protein 1 (PROX1), found in Gallus gallus (Chicken).